We begin with the raw amino-acid sequence, 343 residues long: 3-dehydroquinate synthase (343 aa).

NAD(+) is bound by residues 86 to 90 (GALLD), 110 to 111 (TT), K123, and K132. Positions 165, 229, and 243 each coordinate Zn(2+).

Belongs to the sugar phosphate cyclases superfamily. Dehydroquinate synthase family. Requires Co(2+) as cofactor. It depends on Zn(2+) as a cofactor. NAD(+) serves as cofactor.

It is found in the cytoplasm. The enzyme catalyses 7-phospho-2-dehydro-3-deoxy-D-arabino-heptonate = 3-dehydroquinate + phosphate. The protein operates within metabolic intermediate biosynthesis; chorismate biosynthesis; chorismate from D-erythrose 4-phosphate and phosphoenolpyruvate: step 2/7. Functionally, catalyzes the conversion of 3-deoxy-D-arabino-heptulosonate 7-phosphate (DAHP) to dehydroquinate (DHQ). The chain is 3-dehydroquinate synthase from Pyrobaculum neutrophilum (strain DSM 2338 / JCM 9278 / NBRC 100436 / V24Sta) (Thermoproteus neutrophilus).